The following is a 282-amino-acid chain: ADP-ribosyl cyclase/cyclic ADP-ribose hydrolase (282 aa).

The first 24 residues, 1–24, serve as a signal peptide directing secretion; it reads MSPVAIIACVCLAVTLTSISPSEA. Disulfide bonds link cysteine 39–cysteine 58, cysteine 75–cysteine 155, cysteine 136–cysteine 149, cysteine 230–cysteine 251, and cysteine 263–cysteine 272.

The protein belongs to the ADP-ribosyl cyclase family. Post-translationally, has different isoforms which may be the result of different amounts of phosphorylation. In terms of tissue distribution, immature occoyctes. Oocytes.

It localises to the cytoplasmic vesicle. The enzyme catalyses NAD(+) = cyclic ADP-beta-D-ribose + nicotinamide + H(+). It carries out the reaction nicotinate + NADP(+) = nicotinate-adenine dinucleotide phosphate + nicotinamide. The catalysed reaction is 2'-phospho-cyclic ADP-ribose + nicotinate = nicotinate-adenine dinucleotide phosphate. Its activity is regulated as follows. Activity is presumably regulated by its sequestration in vesicles before egg fertilization. After fertilization and upon NADase release, it could then be regulated via its potential phosphorylation sites. Synthesizes cyclic ADP-ribose (cADPR), a second messenger for calcium mobilization from endoplasmic reticulum; ADP-ribose is a minor product. Synthesizes the Ca(2+) mobilizer nicotinate-adenine dinucleotide phosphate from 2'-phospho-cADPR and nicotinic acid as well as from NADP(+) and nicotinic acid; with NADP(+) as substrate preferentially catalyzes NADP(+) hydrolysis rather than NAADP(+) synthesis, about 70-fold better at pH 7.4. Has cADPR hydrolase activity at very high enzyme concentrations, which is probably not physiological. The conversion of NAD(+) into ADP-ribose is also only observed at high enzyme concentrations and results from the hydrolysis of cADP-ribose. The polypeptide is ADP-ribosyl cyclase/cyclic ADP-ribose hydrolase (Aplysia californica (California sea hare)).